Reading from the N-terminus, the 469-residue chain is MSAVNTPAGFSDFKVADISLADWGRKEVIIAESEMPALMGLRRKYQAEQPLKGAKIIGCIHMTIQTAVLIETLVALGAEVRWSSCNIFSTQDQAAAAIAAAGIPVFAWKGETEQEYEWCIEQTILKDGQPWDANMVLDDGGDLTEILHKKYPAMLEKIHGVTEETTTGVHRLLDMLAKGELKVPAINVNDSVTKSKNDNKYGCRHSLNDAIKRGTDHLLSGKQALVIGYGDVGKGSAQSLRQEGMIVKVTEVDPICAMQACMDGFEVVSPFKDGINTGTEAGINKDLLGRIDLIVTTTGNVNVCDANMLKALKKRAVVCNIGHFDNEIDTAFMRKHWAWEEVKPQVHKIHRTGAGTFDPQNDDYLILLAEGRLVNLGNATGHPSRIMDGSFANQVLAQIFLFEQKFAELPAAKKAERLTVEVLPKKLDEEVALEMVRGFGGVVTQLTPQQAEYIGVTVEGPFKPDAYRY.

3 residues coordinate substrate: threonine 63, aspartate 139, and glutamate 164. 165–167 contributes to the NAD(+) binding site; the sequence is TTT. Substrate is bound by residues lysine 194 and aspartate 198. Residues asparagine 199, 228–233, glutamate 251, asparagine 300, 321–323, and asparagine 375 each bind NAD(+); these read GYGDVG and IGH.

The protein belongs to the adenosylhomocysteinase family. It depends on NAD(+) as a cofactor.

It is found in the cytoplasm. It catalyses the reaction S-adenosyl-L-homocysteine + H2O = L-homocysteine + adenosine. Its pathway is amino-acid biosynthesis; L-homocysteine biosynthesis; L-homocysteine from S-adenosyl-L-homocysteine: step 1/1. In terms of biological role, may play a key role in the regulation of the intracellular concentration of adenosylhomocysteine. In Pseudomonas entomophila (strain L48), this protein is Adenosylhomocysteinase.